The primary structure comprises 817 residues: Cargo-transport protein YPP1 (817 aa).

It belongs to the YPP1 family. Interacts with ribosomes.

The protein localises to the cytoplasmic granule. Its subcellular location is the cell membrane. Its function is as follows. Involved in endocytosis. The chain is Cargo-transport protein YPP1 (YPP1) from Saccharomyces cerevisiae (strain ATCC 204508 / S288c) (Baker's yeast).